A 24-amino-acid polypeptide reads, in one-letter code: NLMQFELLIMKVAGRSGIVWYSDY.

Belongs to the phospholipase A2 family. Group II subfamily. Ca(2+) is required as a cofactor. In terms of tissue distribution, expressed by the venom gland.

It is found in the secreted. The catalysed reaction is a 1,2-diacyl-sn-glycero-3-phosphocholine + H2O = a 1-acyl-sn-glycero-3-phosphocholine + a fatty acid + H(+). PLA2 catalyzes the calcium-dependent hydrolysis of the 2-acyl groups in 3-sn-phosphoglycerides. The chain is Acidic phospholipase A2 4 from Trimeresurus stejnegeri (Chinese green tree viper).